Consider the following 185-residue polypeptide: Ribosome-recycling factor (185 aa).

Belongs to the RRF family.

The protein localises to the cytoplasm. In terms of biological role, responsible for the release of ribosomes from messenger RNA at the termination of protein biosynthesis. May increase the efficiency of translation by recycling ribosomes from one round of translation to another. In Photobacterium profundum (strain SS9), this protein is Ribosome-recycling factor.